The chain runs to 460 residues: ATP synthase subunit beta (460 aa).

150–157 (GGAGVGKT) provides a ligand contact to ATP.

Belongs to the ATPase alpha/beta chains family. F-type ATPases have 2 components, CF(1) - the catalytic core - and CF(0) - the membrane proton channel. CF(1) has five subunits: alpha(3), beta(3), gamma(1), delta(1), epsilon(1). CF(0) has three main subunits: a(1), b(2) and c(9-12). The alpha and beta chains form an alternating ring which encloses part of the gamma chain. CF(1) is attached to CF(0) by a central stalk formed by the gamma and epsilon chains, while a peripheral stalk is formed by the delta and b chains.

Its subcellular location is the cell inner membrane. The enzyme catalyses ATP + H2O + 4 H(+)(in) = ADP + phosphate + 5 H(+)(out). Produces ATP from ADP in the presence of a proton gradient across the membrane. The catalytic sites are hosted primarily by the beta subunits. This is ATP synthase subunit beta from Sodalis glossinidius (strain morsitans).